A 385-amino-acid polypeptide reads, in one-letter code: MRILKSHPLLKILNSYLIDSPQPSNISYLWNFGSLLGLCLGIQIVTGVTLAMHYTPSVLEAFNSVEHIMRDVNNGWLVRYLHSNTASAFFFLVYLHIGRGLYYGSYKSPRTLTWAIGTVILIVMMATAFLGYVLPYGQMSLWGATVITNLMSAIPWIGQDIVEFIWGGFSVNNATLNRFFALHFLLPFVLAALVIMHLIAMHDTVGSGNPLGISGNYDRLPFAPYFVFKDLVTIFIFFIVLSIFVFFMPNALGDSENYVMANPMQTPPAIVPEWYLLPFYAILRSIPNKLLGVIAMFAAILALMVMPITDLSKLRGVQFRPLSKVAFYVFVANFLILMQIGAKHVETPFIEFGQISTVLYFAHFFVIVPVVSLIENSLVELTTKK.

4 consecutive transmembrane segments (helical) span residues 32–52, 76–98, 113–133, and 179–199; these read FGSL…TLAM, WLVR…LHIG, TWAI…LGYV, and FFAL…MHLI. Positions 82 and 96 each coordinate heme b. 2 residues coordinate heme b: histidine 183 and histidine 197. Position 202 (histidine 202) interacts with a ubiquinone. 4 helical membrane passes run 226 to 246, 290 to 310, 322 to 342, and 349 to 369; these read FVFK…IFVF, LLGV…PITD, LSKV…QIGA, and FIEF…VIVP.

The protein belongs to the cytochrome b family. As to quaternary structure, fungal cytochrome b-c1 complex contains 10 subunits; 3 respiratory subunits, 2 core proteins and 5 low-molecular weight proteins. Cytochrome b-c1 complex is a homodimer. It depends on heme b as a cofactor.

It is found in the mitochondrion inner membrane. In terms of biological role, component of the ubiquinol-cytochrome c reductase complex (complex III or cytochrome b-c1 complex) that is part of the mitochondrial respiratory chain. The b-c1 complex mediates electron transfer from ubiquinol to cytochrome c. Contributes to the generation of a proton gradient across the mitochondrial membrane that is then used for ATP synthesis. In Aspergillus terreus (strain NIH 2624 / FGSC A1156), this protein is Cytochrome b (cob).